The sequence spans 345 residues: Phenylalanine--tRNA ligase alpha subunit (345 aa).

Glu262 contacts Mg(2+).

It belongs to the class-II aminoacyl-tRNA synthetase family. Phe-tRNA synthetase alpha subunit type 1 subfamily. Tetramer of two alpha and two beta subunits. Mg(2+) is required as a cofactor.

The protein resides in the cytoplasm. The catalysed reaction is tRNA(Phe) + L-phenylalanine + ATP = L-phenylalanyl-tRNA(Phe) + AMP + diphosphate + H(+). In Ehrlichia canis (strain Jake), this protein is Phenylalanine--tRNA ligase alpha subunit.